The chain runs to 1161 residues: PAN2-PAN3 deadenylation complex catalytic subunit pan2 (1161 aa).

WD repeat units lie at residues 20–59 and 276–315; these read GLPTAATTIAFDDVSELLWAGNEFGRITSFYGPELQRYTS and ANVSFMLGIDISPSGEALAINDAECSIHLWGSPSKIHFNE. A linker region spans residues 316–452; the sequence is MSKEVEFADV…GAKLNGEAED (137 aa). The 370-residue stretch at 453–822 folds into the USP domain; it reads DPLLKYSNVE…SPCILAYQAK (370 aa). An Exonuclease domain is found at 871-1049; the sequence is VALDTEFVDL…IEDARMALRL (179 aa). Asp874, Glu876, Asp983, and Asp1042 together coordinate a divalent metal cation. The stretch at 1009–1060 is one WD 4 repeat; the sequence is NRRLSLRYLAWAVFKEYIQEEPADNNQGHDSIEDARMALRLWKKFQEYEDAG. The interval 1092-1161 is disordered; that stretch reads RPGTAVTMQN…GDFFGGSPLK (70 aa). Polar residues predominate over residues 1097 to 1110; the sequence is VTMQNSSGRNTPST. Positions 1116-1129 are enriched in low complexity; it reads AATATATTSAPATP. The segment covering 1145–1155 has biased composition (gly residues); that stretch reads TFGGPGAGDFF.

The protein belongs to the peptidase C19 family. PAN2 subfamily. Forms a heterotrimer with an asymmetric homodimer of the regulatory subunit pan3 to form the poly(A)-nuclease (PAN) deadenylation complex. The cofactor is a divalent metal cation.

The protein localises to the cytoplasm. The enzyme catalyses Exonucleolytic cleavage of poly(A) to 5'-AMP.. Its activity is regulated as follows. Positively regulated by the regulatory subunit pan3. Its function is as follows. Catalytic subunit of the poly(A)-nuclease (PAN) deadenylation complex, one of two cytoplasmic mRNA deadenylases involved in mRNA turnover. PAN specifically shortens poly(A) tails of RNA and the activity is stimulated by poly(A)-binding protein pab1. PAN deadenylation is followed by rapid degradation of the shortened mRNA tails by the CCR4-NOT complex. Deadenylated mRNAs are then degraded by two alternative mechanisms, namely exosome-mediated 3'-5' exonucleolytic degradation, or deadenylation-dependent mRNA decaping and subsequent 5'-3' exonucleolytic degradation by xrn1. May also be involved in post-transcriptional maturation of mRNA poly(A) tails. This Neosartorya fischeri (strain ATCC 1020 / DSM 3700 / CBS 544.65 / FGSC A1164 / JCM 1740 / NRRL 181 / WB 181) (Aspergillus fischerianus) protein is PAN2-PAN3 deadenylation complex catalytic subunit pan2.